A 125-amino-acid polypeptide reads, in one-letter code: Mite group 2 allergen Gly d 2.02 (125 aa).

Belongs to the NPC2 family.

Its subcellular location is the secreted. The chain is Mite group 2 allergen Gly d 2.02 from Glycyphagus domesticus (House itch mite).